Reading from the N-terminus, the 200-residue chain is Probable UbiX-like flavin prenyltransferase (200 aa).

Residues 9–11 (GAT), S36, 87–90 (SMKT), and R122 each bind FMN.

The protein belongs to the UbiX/PAD1 family. YclB subfamily. In terms of assembly, homododecamer.

The enzyme catalyses dimethylallyl phosphate + FMNH2 = prenylated FMNH2 + phosphate. Involved in the non-oxidative decarboxylation and detoxification of phenolic derivatives under both aerobic and anaerobic conditions. Flavin prenyltransferase that catalyzes the synthesis of the prenylated FMN cofactor (prenyl-FMN) for phenolic acid decarboxylase. The protein is Probable UbiX-like flavin prenyltransferase of Streptomyces sp. (strain D7).